The primary structure comprises 222 residues: Pyridoxal phosphate homeostasis protein (222 aa).

K35 bears the N6-(pyridoxal phosphate)lysine mark.

Belongs to the pyridoxal phosphate-binding protein YggS/PROSC family.

Pyridoxal 5'-phosphate (PLP)-binding protein, which is involved in PLP homeostasis. This Helicobacter pylori (strain ATCC 700392 / 26695) (Campylobacter pylori) protein is Pyridoxal phosphate homeostasis protein.